Reading from the N-terminus, the 574-residue chain is Sodium/hydrogen exchanger 8 (574 aa).

Transmembrane regions (helical) follow at residues 53 to 73, 77 to 97, 116 to 136, 149 to 169, 184 to 204, 254 to 274, 304 to 324, 347 to 367, 373 to 393, 410 to 430, and 444 to 464; these read MTIFFSLLVLAICIILVHLLI, LHFLPESVAVVSLGIIMGAFI, PNMFFLLLLPPIIFESGYSLH, LFSVFGTAISAFIVGGGIYFL, FAFGSLISAVDPVATIAIFNA, LGYFLKMFFGSAALGTLTGLI, GLAEGISLSGIMAILFSGIVM, VAFMCETCVFAFLGLSIFSFP, SFVIWCIVLVLFGRAVNIFPL, MFIMWFSGLRGAIPYALSLHL, and TTIIIVLFTVLLLGGGTMPLI.

Belongs to the monovalent cation:proton antiporter 1 (CPA1) transporter (TC 2.A.36) family.

It is found in the golgi apparatus membrane. Involved in pH regulation to eliminate acids generated by active metabolism or to counter adverse environmental conditions. Major proton extruding system driven by the inward sodium ion chemical gradient. Plays an important role in signal transduction. The chain is Sodium/hydrogen exchanger 8 from Gallus gallus (Chicken).